The sequence spans 567 residues: Fanconi anemia group C protein homolog (567 aa).

Belongs to the multisubunit FA complex composed of FANCA, FANCB, FANCC, FANCE, FANCF, FANCG, FANCL/PHF9 and FANCM. This complex may also include HSP70. Interacts with ZBTB32. Upon IFNG induction, interacts with STAT1. Interacts with CDK1. Interacts with EIF2AK2.

The protein localises to the nucleus. It localises to the cytoplasm. Its function is as follows. DNA repair protein that may operate in a postreplication repair or a cell cycle checkpoint function. May be implicated in interstrand DNA cross-link repair and in the maintenance of normal chromosome stability. Upon IFNG induction, may facilitate STAT1 activation by recruiting STAT1 to IFNGR1. This chain is Fanconi anemia group C protein homolog (FANCC), found in Bos taurus (Bovine).